A 364-amino-acid chain; its full sequence is Sulfate/thiosulfate import ATP-binding protein CysA (364 aa).

One can recognise an ABC transporter domain in the interval 3–237 (IEIARIKKSF…PATRFVLEFM (235 aa)). 35 to 42 (GPSGSGKT) contributes to the ATP binding site.

The protein belongs to the ABC transporter superfamily. Sulfate/tungstate importer (TC 3.A.1.6) family. As to quaternary structure, the complex is composed of two ATP-binding proteins (CysA), two transmembrane proteins (CysT and CysW) and a solute-binding protein (CysP).

It localises to the cell inner membrane. It catalyses the reaction sulfate(out) + ATP + H2O = sulfate(in) + ADP + phosphate + H(+). It carries out the reaction thiosulfate(out) + ATP + H2O = thiosulfate(in) + ADP + phosphate + H(+). In terms of biological role, part of the ABC transporter complex CysAWTP involved in sulfate/thiosulfate import. Responsible for energy coupling to the transport system. This is Sulfate/thiosulfate import ATP-binding protein CysA from Salmonella typhi.